Reading from the N-terminus, the 555-residue chain is Glutamine--tRNA ligase (555 aa).

Residues 34 to 44 (PEPNGYLHIGH) carry the 'HIGH' region motif. ATP-binding positions include 35 to 37 (EPN) and 41 to 47 (HIGHAKS). Residues Asp-67 and Tyr-212 each contribute to the L-glutamine site. ATP-binding positions include Thr-231, 261 to 262 (RL), and 269 to 271 (MSK). Positions 268 to 272 (VMSKR) match the 'KMSKS' region motif. Residues 317–324 (TKQDNTIE) form an interaction with tRNA region.

The protein belongs to the class-I aminoacyl-tRNA synthetase family. Monomer.

It localises to the cytoplasm. The catalysed reaction is tRNA(Gln) + L-glutamine + ATP = L-glutaminyl-tRNA(Gln) + AMP + diphosphate. The sequence is that of Glutamine--tRNA ligase from Salmonella schwarzengrund (strain CVM19633).